The sequence spans 226 residues: UPF0502 protein azo0627 (226 aa).

This sequence belongs to the UPF0502 family.

The polypeptide is UPF0502 protein azo0627 (Azoarcus sp. (strain BH72)).